We begin with the raw amino-acid sequence, 282 residues long: MERPSLRALLLGAAGLLLLLLPLSSSSSSDTCGPCEPASCPPLPPLGCLLGETRDACGCCPMCARGEGEPCGGGGAGRGYCAPGMECVKSRKRRKGKAGAAAGGPGVSGVCVCKSRYPVCGSDGTTYPSGCQLRAASQRAESRGEKAITQVSKGTCEQGPSIVTPPKDIWNVTGAQVYLSCEVIGIPTPVLIWNKVKRGHYGVQRTELLPGDRDNLAIQTRGGPEKHEVTGWVLVSPLSKEDAGEYECHASNSQGQASASAKITVVDALHEIPVKKGEGAEL.

Residues 1–26 form the signal peptide; that stretch reads MERPSLRALLLGAAGLLLLLLPLSSS. The IGFBP N-terminal domain maps to 28–114; that stretch reads SSDTCGPCEP…PGVSGVCVCK (87 aa). 7 disulfide bridges follow: Cys32/Cys57, Cys35/Cys59, Cys40/Cys60, Cys48/Cys63, Cys71/Cys87, Cys81/Cys111, and Cys120/Cys156. The Kazal-like domain maps to 105–158; the sequence is PGVSGVCVCKSRYPVCGSDGTTYPSGCQLRAASQRAESRGEKAITQVSKGTCEQ. Positions 160–264 constitute an Ig-like C2-type domain; the sequence is PSIVTPPKDI…GQASASAKIT (105 aa). A glycan (N-linked (GlcNAc...) asparagine) is linked at Asn171. An intrachain disulfide couples Cys181 to Cys248. Position 239 is a phosphoserine; by FAM20C (Ser239).

In terms of assembly, may interact with VPS24/CHMP3; the relevance of such interaction however remains unclear. Interacts with CD93; this interaction plays a role in endothelial cells angiogenesis. Post-translationally, N-glycosylated.

It localises to the secreted. Functionally, binds IGF1 and IGF2 with a relatively low affinity. Stimulates prostacyclin (PGI2) production. Stimulates cell adhesion. Acts as a ligand for CD93 to play a role in angiogenesis. In Homo sapiens (Human), this protein is Insulin-like growth factor-binding protein 7 (IGFBP7).